The following is a 161-amino-acid chain: MQTIEQQITNIIEESLTDMGFELVLVKFKGVNTKVVEILIDSLNGNKISIEDCTNVSRTISAILDVEDLIEDAYSLEVSSSGIERKLVKFENYNRFLGREVKVKLKALLNGKTLYQGKIIKAENNKIYLKCAEQEVLIDFNLIKNANLVLTEEVFKKLLGS.

This sequence belongs to the RimP family.

It is found in the cytoplasm. Functionally, required for maturation of 30S ribosomal subunits. The sequence is that of Ribosome maturation factor RimP from Rickettsia typhi (strain ATCC VR-144 / Wilmington).